The sequence spans 194 residues: NADH-quinone oxidoreductase subunit B (194 aa).

[4Fe-4S] cluster is bound by residues Cys-72, Cys-73, Cys-137, and Cys-167.

It belongs to the complex I 20 kDa subunit family. NDH-1 is composed of 14 different subunits. Subunits NuoB, C, D, E, F, and G constitute the peripheral sector of the complex. [4Fe-4S] cluster is required as a cofactor.

It is found in the cell inner membrane. The enzyme catalyses a quinone + NADH + 5 H(+)(in) = a quinol + NAD(+) + 4 H(+)(out). Its function is as follows. NDH-1 shuttles electrons from NADH, via FMN and iron-sulfur (Fe-S) centers, to quinones in the respiratory chain. Couples the redox reaction to proton translocation (for every two electrons transferred, four hydrogen ions are translocated across the cytoplasmic membrane), and thus conserves the redox energy in a proton gradient. In Granulibacter bethesdensis (strain ATCC BAA-1260 / CGDNIH1), this protein is NADH-quinone oxidoreductase subunit B.